The primary structure comprises 160 residues: Ribosomal RNA large subunit methyltransferase H (160 aa).

The S-adenosyl-L-methionine site is built by Leu76 and Gly108.

It belongs to the RNA methyltransferase RlmH family. In terms of assembly, homodimer.

It localises to the cytoplasm. The enzyme catalyses pseudouridine(1915) in 23S rRNA + S-adenosyl-L-methionine = N(3)-methylpseudouridine(1915) in 23S rRNA + S-adenosyl-L-homocysteine + H(+). Its function is as follows. Specifically methylates the pseudouridine at position 1915 (m3Psi1915) in 23S rRNA. This chain is Ribosomal RNA large subunit methyltransferase H, found in Nitrobacter winogradskyi (strain ATCC 25391 / DSM 10237 / CIP 104748 / NCIMB 11846 / Nb-255).